Reading from the N-terminus, the 96-residue chain is Putative pterin-4-alpha-carbinolamine dehydratase (96 aa).

Belongs to the pterin-4-alpha-carbinolamine dehydratase family.

It carries out the reaction (4aS,6R)-4a-hydroxy-L-erythro-5,6,7,8-tetrahydrobiopterin = (6R)-L-erythro-6,7-dihydrobiopterin + H2O. In Prochlorococcus marinus (strain SARG / CCMP1375 / SS120), this protein is Putative pterin-4-alpha-carbinolamine dehydratase.